Here is a 216-residue protein sequence, read N- to C-terminus: N-glycosylase/DNA lyase (216 aa).

The 8-oxoguanine site is built by Gln-27, Ser-48, and Trp-59. The interval Glu-106 to Pro-170 is helix-hairpin-helix. Lys-130 acts as the Schiff-base intermediate with DNA in catalysis. Residues Phe-134 and Pro-160 each coordinate 8-oxoguanine. Asp-162 is a catalytic residue. The 8-oxoguanine site is built by Asp-190 and Trp-194.

Belongs to the archaeal N-glycosylase/DNA lyase (AGOG) family.

It carries out the reaction 2'-deoxyribonucleotide-(2'-deoxyribose 5'-phosphate)-2'-deoxyribonucleotide-DNA = a 3'-end 2'-deoxyribonucleotide-(2,3-dehydro-2,3-deoxyribose 5'-phosphate)-DNA + a 5'-end 5'-phospho-2'-deoxyribonucleoside-DNA + H(+). In terms of biological role, DNA repair enzyme that is part of the base excision repair (BER) pathway; protects from oxidative damage by removing the major product of DNA oxidation, 8-oxoguanine (GO), from single- and double-stranded DNA substrates. This Nanoarchaeum equitans (strain Kin4-M) protein is N-glycosylase/DNA lyase.